We begin with the raw amino-acid sequence, 741 residues long: MKINTLPTLSALTLAMSLALGAGMATAQEQATGNQFWWPEKLNLSPLRQNAIESNPYGSDYRYAEAFNTLDLDAVKKDIKALMTESQDWWPADYGHYGPFFIRMAWHSAGVYRIFDGRGGAAGGQQRFEPLNSWPADNVSLDKARRLLWPIKQKYGSKLSWGDLMVLTGNVALESMGFKTFGFGGGRVDDWEAEMVNWGSEKAWLDNKRHNGKGELAKPMGATQMGLIYVNPEGPNGVPDPLASAKEIRDTFGRMAMNDEETVALIAGGHTFGKAHGAHDPAKCVGADPAAAGIEEQGLGWKNKCGKGHSEDTVTSGLEGAWSSNPTKWTMEYLTWLYTFDWVQTKSPAGHIQWTPADGKAANLVPDAHLPDKRHAPIMFTSDIALKADPIYREITTRFLKNPQEFELAFAKAWFKLTHRDLGPKARYLGADVPAEALIWQDPIPALDHPLIDNADIKALGNKILASGLTVPELVRTAWASASSFRGTDMRGGANGARIRLEPMMNWQANNPKELAKVLAKLEKVQKDFNGSLKGSKKVSLADVIVLGGSVAVEKAAKEAGVVISVPFTPGRMDATQVQTDVNSFAVLEPAADGFRNYYSKDSSLSPAEMLIERANMLNLTVPEMTVLVGGLRALDANSAGVKHGVFTDKPGVLSNDFFVNLLDMSTKWRKSDKQEGIYEGQDRNSGKLKWTATPVDLIFGSHSELRAVSEVYGAQDGQDRFIQDFVKAWNKVMNADRFDI.

A signal peptide spans 1–27; that stretch reads MKINTLPTLSALTLAMSLALGAGMATA. The tryptophyl-tyrosyl-methioninium (Trp-Tyr) (with M-255) cross-link spans 106-229; that stretch reads WHSAGVYRIF…MGATQMGLIY (124 aa). The Proton acceptor role is filled by histidine 107. The tryptophyl-tyrosyl-methioninium (Tyr-Met) (with W-106) cross-link spans 229–255; sequence YVNPEGPNGVPDPLASAKEIRDTFGRM. A heme b-binding site is contributed by histidine 270.

Belongs to the peroxidase family. Peroxidase/catalase subfamily. Homodimer or homotetramer. The cofactor is heme b. Post-translationally, formation of the three residue Trp-Tyr-Met cross-link is important for the catalase, but not the peroxidase activity of the enzyme.

It catalyses the reaction H2O2 + AH2 = A + 2 H2O. The catalysed reaction is 2 H2O2 = O2 + 2 H2O. Functionally, bifunctional enzyme with both catalase and broad-spectrum peroxidase activity. The sequence is that of Catalase-peroxidase 2 from Shewanella oneidensis (strain ATCC 700550 / JCM 31522 / CIP 106686 / LMG 19005 / NCIMB 14063 / MR-1).